Reading from the N-terminus, the 184-residue chain is ATP synthase subunit b, chloroplastic (184 aa).

The chain crosses the membrane as a helical span at residues Leu27–Leu49.

Belongs to the ATPase B chain family. As to quaternary structure, F-type ATPases have 2 components, F(1) - the catalytic core - and F(0) - the membrane proton channel. F(1) has five subunits: alpha(3), beta(3), gamma(1), delta(1), epsilon(1). F(0) has four main subunits: a(1), b(1), b'(1) and c(10-14). The alpha and beta chains form an alternating ring which encloses part of the gamma chain. F(1) is attached to F(0) by a central stalk formed by the gamma and epsilon chains, while a peripheral stalk is formed by the delta, b and b' chains.

The protein resides in the plastid. It is found in the chloroplast thylakoid membrane. In terms of biological role, f(1)F(0) ATP synthase produces ATP from ADP in the presence of a proton or sodium gradient. F-type ATPases consist of two structural domains, F(1) containing the extramembraneous catalytic core and F(0) containing the membrane proton channel, linked together by a central stalk and a peripheral stalk. During catalysis, ATP synthesis in the catalytic domain of F(1) is coupled via a rotary mechanism of the central stalk subunits to proton translocation. Its function is as follows. Component of the F(0) channel, it forms part of the peripheral stalk, linking F(1) to F(0). In Cicer arietinum (Chickpea), this protein is ATP synthase subunit b, chloroplastic.